Here is a 229-residue protein sequence, read N- to C-terminus: MAKKSKQMRAALEKVDSTKAYSVEEAVTLAKETNFAKFDASVEVAYNLNIDVRKADQQIRGAMVLPNGTGKTQRVLVFARGAKAEEAKAAGADFVGEDDLVAKINGGWLDFDVVIATPDMMAIVGRLGRVLGPRNLMPNPKTGTVTMDVAKAVEESKGGKITYRADKAGNVQAIIGKVSFDADKLVENFKAFHEVMVKAKPATAKGTYMTNVSITTTQGVGIKVDPSSF.

It belongs to the universal ribosomal protein uL1 family. As to quaternary structure, part of the 50S ribosomal subunit.

In terms of biological role, binds directly to 23S rRNA. The L1 stalk is quite mobile in the ribosome, and is involved in E site tRNA release. Protein L1 is also a translational repressor protein, it controls the translation of the L11 operon by binding to its mRNA. In Streptococcus equi subsp. zooepidemicus (strain MGCS10565), this protein is Large ribosomal subunit protein uL1.